The primary structure comprises 447 residues: Methylenetetrahydrofolate--tRNA-(uracil-5-)-methyltransferase TrmFO (447 aa).

13-18 (GAGLAG) is an FAD binding site.

Belongs to the MnmG family. TrmFO subfamily. FAD serves as cofactor.

It localises to the cytoplasm. The enzyme catalyses uridine(54) in tRNA + (6R)-5,10-methylene-5,6,7,8-tetrahydrofolate + NADH + H(+) = 5-methyluridine(54) in tRNA + (6S)-5,6,7,8-tetrahydrofolate + NAD(+). It catalyses the reaction uridine(54) in tRNA + (6R)-5,10-methylene-5,6,7,8-tetrahydrofolate + NADPH + H(+) = 5-methyluridine(54) in tRNA + (6S)-5,6,7,8-tetrahydrofolate + NADP(+). Catalyzes the folate-dependent formation of 5-methyl-uridine at position 54 (M-5-U54) in all tRNAs. The sequence is that of Methylenetetrahydrofolate--tRNA-(uracil-5-)-methyltransferase TrmFO from Streptococcus thermophilus (strain ATCC BAA-491 / LMD-9).